A 1023-amino-acid polypeptide reads, in one-letter code: Vacuolar membrane protease (1023 aa).

The Cytoplasmic portion of the chain corresponds to 1–80 (MRAAGCGGTG…FFRSVFGYRK (80 aa)). A compositionally biased stretch (polar residues) spans 17-48 (KLSRSISQHQPKSMPQASVNSEQNPSVPNSPS). The interval 17–59 (KLSRSISQHQPKSMPQASVNSEQNPSVPNSPSAHKPARSQSAQ) is disordered. A helical membrane pass occupies residues 81–101 (TSLTFLVALVFAATLLLSWAD). Residues 102 to 425 (SSLDFSVDMP…VVFSVSQVVS (324 aa)) are Vacuolar-facing. Asn-170 and Asn-200 each carry an N-linked (GlcNAc...) asparagine glycan. Positions 214 and 226 each coordinate Zn(2+). Glu-259 (proton acceptor) is an active-site residue. Zn(2+) is bound by residues Glu-260, Glu-285, and His-357. The helical transmembrane segment at 426 to 446 (ANIALLVVVPVASLLLLFIIF) threads the bilayer. Over 447-461 (RCNKGWGFNFVNAIK) the chain is Cytoplasmic. Residues 462–482 (YPLSLVASVLVLTFVSQVIIV) form a helical membrane-spanning segment. Residues 483–491 (PSNPFLVNS) are Vacuolar-facing. Asn-490 is a glycosylation site (N-linked (GlcNAc...) asparagine). A helical transmembrane segment spans residues 492-512 (SIGLLVATLFSLFLLLNYIVL). At 513-529 (NGLNLVFKSFKGHQHDE) the chain is on the cytoplasmic side. A helical transmembrane segment spans residues 530-550 (KLIVMCESSFLTWILLLWSTV). At 551–564 (KLSHNKFGDDHTGE) the chain is on the vacuolar side. A helical transmembrane segment spans residues 565–585 (LFIPILFSLQAVACFLGFLGW). Over 586 to 643 (CFKPSKKVKVSREEHQPLLSSNGSNYGTQDDDDSLAPSSSLSLQSGFSENCEVHETKS) the chain is Cytoplasmic. Positions 604–613 (LSSNGSNYGT) are enriched in polar residues. The tract at residues 604-626 (LSSNGSNYGTQDDDDSLAPSSSL) is disordered. Residues 644–664 (FSYDWLVQFLVIVPISSLIIF) form a helical membrane-spanning segment. The Vacuolar portion of the chain corresponds to 665–687 (NSGSLILNGLNKSIQESLSAQNL). An N-linked (GlcNAc...) asparagine glycan is attached at Asn-675. Residues 688–708 (IYKFIQIFVIVWSIPFLPFIF) form a helical membrane-spanning segment. The Cytoplasmic segment spans residues 709–712 (KLNR). A helical membrane pass occupies residues 713–733 (IIVLALSLVLLYGFFAVNITD). Residues 734–1023 (AFNDANPLKL…MVSVTKYIEV (290 aa)) lie on the Vacuolar side of the membrane. 3 N-linked (GlcNAc...) asparagine glycosylation sites follow: Asn-815, Asn-858, and Asn-892.

Belongs to the peptidase M28 family. The cofactor is Zn(2+).

Its subcellular location is the vacuole membrane. In terms of biological role, may be involved in vacuolar sorting and osmoregulation. This Clavispora lusitaniae (strain ATCC 42720) (Yeast) protein is Vacuolar membrane protease.